A 322-amino-acid chain; its full sequence is Cytochrome c biogenesis protein CcsA (322 aa).

7 helical membrane passes run 9 to 29 (ILTH…LITL), 44 to 64 (GMIV…VSSG), 68 to 88 (LSNL…LHTI), 143 to 163 (MLLS…ILII), 226 to 246 (IISL…VWAN), 260 to 274 (TWAF…IYLH), and 289 to 309 (IASI…LLGI).

It belongs to the CcmF/CycK/Ccl1/NrfE/CcsA family. In terms of assembly, may interact with Ccs1.

It localises to the plastid. The protein resides in the chloroplast thylakoid membrane. Functionally, required during biogenesis of c-type cytochromes (cytochrome c6 and cytochrome f) at the step of heme attachment. The sequence is that of Cytochrome c biogenesis protein CcsA from Hordeum vulgare (Barley).